The primary structure comprises 154 residues: Putative pre-16S rRNA nuclease (154 aa).

It belongs to the YqgF nuclease family.

It is found in the cytoplasm. Its function is as follows. Could be a nuclease involved in processing of the 5'-end of pre-16S rRNA. The sequence is that of Putative pre-16S rRNA nuclease from Rickettsia akari (strain Hartford).